The chain runs to 161 residues: Abscisic acid receptor PYL11 (161 aa).

The segment at 3–154 (TSQKYHTCGS…NLKSLAKLSE (152 aa)) is START-like. Residues lysine 39, 68 to 73 (AEFSRE), 95 to 101 (RLVNYRS), and glutamate 119 each bind abscisate. A Gate loop motif is present at residues 64–68 (SGLPA). Positions 94 to 96 (HRL) match the Latch loop motif.

Belongs to the PYR/PYL/RCAR abscisic acid intracellular receptor family. As to quaternary structure, homodimer. Binds ABA on one subunit only. Interacts with PP2Cs. Binds to CARs protein in an ABA-independent manner, both at the plasma membrane and in the nucleus. Interacts with I-2 and TOPP1.

Its subcellular location is the cytoplasm. The protein localises to the nucleus. It localises to the cell membrane. Functionally, receptor for abscisic acid (ABA) required for ABA-mediated responses such as stomatal closure and germination inhibition. Inhibits the activity of group-A protein phosphatases type 2C (PP2Cs) when activated by ABA. Suppresses the phosphatase activity of TOPP1 in a dose-dependent manner in vitro. The sequence is that of Abscisic acid receptor PYL11 (PYL11) from Arabidopsis thaliana (Mouse-ear cress).